Reading from the N-terminus, the 394-residue chain is Junctional adhesion molecule-like (394 aa).

Positions 1–19 (MFCPLKLILLPVLLDYSLG) are cleaved as a signal peptide. Ig-like V-type domains are found at residues 20–132 (LNDL…KAVV) and 137–250 (PEEP…IVLH). Residues 20–275 (LNDLNVSPPE…RPLVLGGNQL (256 aa)) lie on the Extracellular side of the membrane. Cystine bridges form between cysteine 42–cysteine 116 and cysteine 155–cysteine 234. Residues asparagine 76 and asparagine 231 are each glycosylated (N-linked (GlcNAc...) asparagine). Residues 276–296 (VIIVGIVCATILLLPVLILIV) form a helical membrane-spanning segment. At 297–394 (KKTCGNKSSV…GGMPKTQQAF (98 aa)) the chain is on the cytoplasmic side. The interval 369-394 (PSLRSDRNNSLEKKSGGGMPKTQQAF) is disordered. Positions 372–383 (RSDRNNSLEKKS) are enriched in basic and acidic residues.

It belongs to the immunoglobulin superfamily. In terms of assembly, homodimer; active form in leukocyte-endothelial cell adhesion. Interacts (homodimeric form) with CXADR. Interacts (via cytoplasmic domain) with the PI3 kinase; upon CXADR-binding. Interacts with ITGA4 and ITGB1; integrin alpha-4/beta-1 may regulate leukocyte to endothelial cells adhesion by controlling JAML homodimerization. In terms of tissue distribution, expression is restricted to the hematopoietic tissues with the exception of liver. Expressed in fetal liver, spleen and thymus. Preferentially expressed by mature leukocytes (at protein level).

It is found in the cell membrane. The protein resides in the cell junction. Transmembrane protein of the plasma membrane of leukocytes that control their migration and activation through interaction with CXADR, a plasma membrane receptor found on adjacent epithelial and endothelial cells. The interaction between both receptors mediates the activation of gamma-delta T-cells, a subpopulation of T-cells residing in epithelia and involved in tissue homeostasis and repair. Upon epithelial CXADR-binding, JAML induces downstream cell signaling events in gamma-delta T-cells through PI3-kinase and MAP kinases. It results in proliferation and production of cytokines and growth factors by T-cells that in turn stimulate epithelial tissues repair. It also controls the transmigration of leukocytes within epithelial and endothelial tissues through adhesive interactions with epithelial and endothelial CXADR. The polypeptide is Junctional adhesion molecule-like (Homo sapiens (Human)).